The chain runs to 437 residues: Phosphomethylpyrimidine synthase (437 aa).

Substrate is bound by residues Asn-69, Met-98, Tyr-127, His-163, Ser-185 to Gly-187, Asp-226 to Arg-229, and Glu-265. Residue His-269 participates in Zn(2+) binding. Tyr-292 serves as a coordination point for substrate. Zn(2+) is bound at residue His-333. Residues Cys-409, Cys-412, and Cys-416 each coordinate [4Fe-4S] cluster.

Belongs to the ThiC family. [4Fe-4S] cluster is required as a cofactor.

The enzyme catalyses 5-amino-1-(5-phospho-beta-D-ribosyl)imidazole + S-adenosyl-L-methionine = 4-amino-2-methyl-5-(phosphooxymethyl)pyrimidine + CO + 5'-deoxyadenosine + formate + L-methionine + 3 H(+). The protein operates within cofactor biosynthesis; thiamine diphosphate biosynthesis. Functionally, catalyzes the synthesis of the hydroxymethylpyrimidine phosphate (HMP-P) moiety of thiamine from aminoimidazole ribotide (AIR) in a radical S-adenosyl-L-methionine (SAM)-dependent reaction. The chain is Phosphomethylpyrimidine synthase from Clostridium botulinum (strain Kyoto / Type A2).